The sequence spans 395 residues: Zinc-regulated GTPase metalloprotein activator 1A (395 aa).

The disordered stretch occupies residues 1-22; sequence MLPAVGSADEEEDPAEEDCPEL. The segment covering 8 to 20 has biased composition (acidic residues); sequence ADEEEDPAEEDCP. Positions 17-24 match the psi-PxLVp motif motif; sequence EDCPELVP. A GTP-binding site is contributed by 49–56; it reads GYLGAGKT. Cys107, Cys109, and Cys110 together coordinate Zn(2+). Residues 107–110 carry the CXCC motif motif; it reads CLCC. Residues 110-114 and 203-206 each bind GTP; these read CSVKD and NKTD. The CobW C-terminal domain maps to 274 to 377; sequence IVTITFEVPG…ILKQLFIATV (104 aa).

The protein belongs to the SIMIBI class G3E GTPase family. ZNG1 subfamily. Ubiquitously expressed. Up-regulated in cultured astrocytes treated with dopamine.

It localises to the nucleus. It carries out the reaction GTP + H2O = GDP + phosphate + H(+). Its function is as follows. Zinc chaperone that directly transfers zinc cofactor to target metalloproteins, thereby activating them. Catalyzes zinc insertion into the active site of methionine aminopeptidase METAP1, which function to cleave the initiator methionine from polypeptides during or after protein translation. Mechanistically, the N-terminal psi-PxLVp motif binds to the C6H2-type zinc finger of inactive form of METAP1. After formation of the docked complex, zinc is transferred from the CXCC motif in the GTPase domain of ZNG1A to the zinc binding site in the peptidase domain of METAP1 in a process requiring GTP hydrolysis. GTP/GDP exchange is required for release of active METAP1. The chain is Zinc-regulated GTPase metalloprotein activator 1A from Homo sapiens (Human).